A 145-amino-acid chain; its full sequence is D-aminoacyl-tRNA deacylase (145 aa).

Positions 137–138 match the Gly-cisPro motif, important for rejection of L-amino acids motif; the sequence is GP.

Belongs to the DTD family. Homodimer.

The protein resides in the cytoplasm. The catalysed reaction is glycyl-tRNA(Ala) + H2O = tRNA(Ala) + glycine + H(+). It carries out the reaction a D-aminoacyl-tRNA + H2O = a tRNA + a D-alpha-amino acid + H(+). In terms of biological role, an aminoacyl-tRNA editing enzyme that deacylates mischarged D-aminoacyl-tRNAs. Also deacylates mischarged glycyl-tRNA(Ala), protecting cells against glycine mischarging by AlaRS. Acts via tRNA-based rather than protein-based catalysis; rejects L-amino acids rather than detecting D-amino acids in the active site. By recycling D-aminoacyl-tRNA to D-amino acids and free tRNA molecules, this enzyme counteracts the toxicity associated with the formation of D-aminoacyl-tRNA entities in vivo and helps enforce protein L-homochirality. This is D-aminoacyl-tRNA deacylase from Salmonella typhimurium (strain LT2 / SGSC1412 / ATCC 700720).